We begin with the raw amino-acid sequence, 86 residues long: Conotoxin Lt15a (86 aa).

Residues 1–23 (MEKLTILILVATVLLAIQVLVQS) form the signal peptide. Positions 24-49 (DGENPVKGRVKHYAAKRFSALFRGPR) are excised as a propeptide.

Belongs to the conotoxin O2 superfamily. Contains 4 disulfide bonds. In terms of tissue distribution, expressed by the venom duct.

The protein localises to the secreted. The polypeptide is Conotoxin Lt15a (Conus litteratus (Lettered cone)).